We begin with the raw amino-acid sequence, 78 residues long: UPF0291 protein LBUL_1264 (78 aa).

It belongs to the UPF0291 family.

Its subcellular location is the cytoplasm. This is UPF0291 protein LBUL_1264 from Lactobacillus delbrueckii subsp. bulgaricus (strain ATCC BAA-365 / Lb-18).